Here is a 144-residue protein sequence, read N- to C-terminus: 3-dehydroquinate dehydratase (144 aa).

Tyr-24 functions as the Proton acceptor in the catalytic mechanism. Substrate is bound by residues Asn-76, His-82, and Asp-89. His-102 acts as the Proton donor in catalysis. Substrate is bound by residues 103–104 and Arg-113; that span reads LS.

Belongs to the type-II 3-dehydroquinase family. Homododecamer.

The catalysed reaction is 3-dehydroquinate = 3-dehydroshikimate + H2O. It participates in metabolic intermediate biosynthesis; chorismate biosynthesis; chorismate from D-erythrose 4-phosphate and phosphoenolpyruvate: step 3/7. In terms of biological role, catalyzes a trans-dehydration via an enolate intermediate. The sequence is that of 3-dehydroquinate dehydratase from Nitrosomonas europaea (strain ATCC 19718 / CIP 103999 / KCTC 2705 / NBRC 14298).